Reading from the N-terminus, the 143-residue chain is Nucleoside diphosphate kinase (143 aa).

ATP contacts are provided by K11, F59, R87, T93, R104, and N114. The active-site Pros-phosphohistidine intermediate is the H117.

Belongs to the NDK family. Homotetramer. Requires Mg(2+) as cofactor.

The protein resides in the cytoplasm. It carries out the reaction a 2'-deoxyribonucleoside 5'-diphosphate + ATP = a 2'-deoxyribonucleoside 5'-triphosphate + ADP. The catalysed reaction is a ribonucleoside 5'-diphosphate + ATP = a ribonucleoside 5'-triphosphate + ADP. Its function is as follows. Major role in the synthesis of nucleoside triphosphates other than ATP. The ATP gamma phosphate is transferred to the NDP beta phosphate via a ping-pong mechanism, using a phosphorylated active-site intermediate. The polypeptide is Nucleoside diphosphate kinase (Escherichia coli O81 (strain ED1a)).